The following is a 288-amino-acid chain: Energy-coupling factor transporter ATP-binding protein EcfA2 (288 aa).

An ABC transporter domain is found at 3–246; that stretch reads IKLEQLGYCY…PDALVDLGLS (244 aa). Residue 40–47 coordinates ATP; it reads GHTGSGKS.

The protein belongs to the ABC transporter superfamily. Energy-coupling factor EcfA family. In terms of assembly, forms a stable energy-coupling factor (ECF) transporter complex composed of 2 membrane-embedded substrate-binding proteins (S component), 2 ATP-binding proteins (A component) and 2 transmembrane proteins (T component).

It localises to the cell membrane. Its function is as follows. ATP-binding (A) component of a common energy-coupling factor (ECF) ABC-transporter complex. Unlike classic ABC transporters this ECF transporter provides the energy necessary to transport a number of different substrates. This is Energy-coupling factor transporter ATP-binding protein EcfA2 from Listeria welshimeri serovar 6b (strain ATCC 35897 / DSM 20650 / CCUG 15529 / CIP 8149 / NCTC 11857 / SLCC 5334 / V8).